The following is a 561-amino-acid chain: MSSPIQPLPLNVINLIAAGEVIDSIAAVVRELVENALDAGATRLVISLFPESWRVQVADNGTGMTLADLRHCALPHSTSKIHQLDDLWKITTLGFRGEALHSLAQVADLEIASRCTSDGVGWCLRYQSSGEPLREEPTAIAPGTIVTVGNLFGKMPVRRQGLPAISTQLKAVQSFIENMALCHPQVTWQVWHNQRLWLNISPGKTPQQILPQLLKGVHYHDLQFVSQGVKSPQESTQKDLDLIEVTLGLPDRCHRHRPDWVKVGINGRIVRSPPVEQAILVAFSRTLPKDRFPVCFIHLTLCPSQIDWNRHPAKVEIYLHSLDFWQEQVSKLIEQGLRLSPQTLASAAQNQRVGKLLKASEEKASYRVDAKDHQTDANAVGLMPLKAVAQVRNTYIMAEHSTGLWLIEQHIAHERVLYETLQDNWQLIPLETPIILTKLSDNQVEQLARIGLEIEVFGEQLWAVRTVPKLLSTREDCPEALVELSIGGDLQTAQVAVACRSAIRNGTPMTLSQMQELLDQWKTTRNPATCPHGRPIYLSLEESSLSRFFRRHWVIGKSHGI.

This sequence belongs to the DNA mismatch repair MutL/HexB family.

This protein is involved in the repair of mismatches in DNA. It is required for dam-dependent methyl-directed DNA mismatch repair. May act as a 'molecular matchmaker', a protein that promotes the formation of a stable complex between two or more DNA-binding proteins in an ATP-dependent manner without itself being part of a final effector complex. This chain is DNA mismatch repair protein MutL, found in Rippkaea orientalis (strain PCC 8801 / RF-1) (Cyanothece sp. (strain PCC 8801)).